We begin with the raw amino-acid sequence, 622 residues long: ATP-dependent lipid A-core flippase (622 aa).

5 helical membrane-spanning segments follow: residues 32 to 52 (IVAA…LAAF), 91 to 111 (VWGT…LVVI), 192 to 212 (IVLL…FPLL), 286 to 306 (SPFS…IALW), and 312 to 332 (YTTI…YAPI). The ABC transmembrane type-1 domain maps to 33–344 (VAALIAIFGV…LANISIPMQT (312 aa)). One can recognise an ABC transporter domain in the interval 378–611 (FRNVDVEYRS…NGYYTMLRNI (234 aa)). 410–417 (GRSGSGKS) serves as a coordination point for ATP.

It belongs to the ABC transporter superfamily. Lipid exporter (TC 3.A.1.106) family. As to quaternary structure, homodimer.

Its subcellular location is the cell inner membrane. It catalyses the reaction ATP + H2O + lipid A-core oligosaccharideSide 1 = ADP + phosphate + lipid A-core oligosaccharideSide 2.. Involved in lipopolysaccharide (LPS) biosynthesis. Translocates lipid A-core from the inner to the outer leaflet of the inner membrane. Transmembrane domains (TMD) form a pore in the inner membrane and the ATP-binding domain (NBD) is responsible for energy generation. The sequence is that of ATP-dependent lipid A-core flippase from Neisseria gonorrhoeae (strain ATCC 700825 / FA 1090).